A 341-amino-acid chain; its full sequence is Arfaptin-2 (341 aa).

The disordered stretch occupies residues 46–85; it reads NETSIVSGGYGGSGDGLIPTGSGRHPSHSTTPSGPGDEVA. Ser72 carries the phosphoserine modification. Thr76 bears the Phosphothreonine mark. One can recognise an AH domain in the interval 121-321; it reads TVDLELELQI…NQKQLEQTLQ (201 aa).

As to quaternary structure, forms homodimers or heterodimers with ARFIP1. Interacts with RAC1. Specifically binds to GTP-bound ARF1 and ARF6, but binds to RAC1.GTP and RAC1.GDP with similar affinities. Interacts with ARL1. Interacts (via N-terminus) with IKBKB and IKBKG; these interactions inhibit activation of NF-kappa-B.

It localises to the golgi apparatus. The protein resides in the trans-Golgi network membrane. Functionally, plays a role in constitutive metalloproteinase (MMP) secretion from the trans Golgi network. May have important functions during vesicle biogenesis at certain cargo subdomains, which could be predominantly utilized by secreted MMPs, such as MMP7 and MMP2. Also involved in autophagy by regulating the starvation-dependent trafficking of ATG9A vesicles which deliver the phosphatidylinositol 4-kinase beta (PI4KB) to the autophagosome initiation site. Involved in phagophore growth during mitophagy by regulating ATG9A trafficking to mitochondria. In addition, plays a role in NF-kappa-B inhibition by interacting with IKBKB and IKBKG. This Homo sapiens (Human) protein is Arfaptin-2.